We begin with the raw amino-acid sequence, 463 residues long: mRNA-capping enzyme subunit alpha (463 aa).

K66 (N6-GMP-lysine intermediate) is an active-site residue. The interval 404 to 463 (WEERKSKKRTHSSISGPMLPPVAETKAPREATQSRYIDDEDWSDEADDDDEDSLKRARIE) is disordered. The segment covering 441–455 (DDEDWSDEADDDDED) has biased composition (acidic residues).

Belongs to the eukaryotic GTase family. In terms of assembly, heterodimer. The mRNA-capping enzyme is composed of two separate chains alpha and beta, respectively a mRNA guanylyltransferase and an mRNA 5'-triphosphate monophosphatase.

The protein resides in the nucleus. The enzyme catalyses a 5'-end diphospho-ribonucleoside in mRNA + GTP + H(+) = a 5'-end (5'-triphosphoguanosine)-ribonucleoside in mRNA + diphosphate. Functionally, second step of mRNA capping. Transfer of the GMP moiety of GTP to the 5'-end of RNA via an enzyme-GMP covalent reaction intermediate. This chain is mRNA-capping enzyme subunit alpha (CEG1), found in Eremothecium gossypii (strain ATCC 10895 / CBS 109.51 / FGSC 9923 / NRRL Y-1056) (Yeast).